We begin with the raw amino-acid sequence, 88 residues long: Small ribosomal subunit protein uS15 (88 aa).

It belongs to the universal ribosomal protein uS15 family. In terms of assembly, part of the 30S ribosomal subunit. Forms a bridge to the 50S subunit in the 70S ribosome, contacting the 23S rRNA.

Its function is as follows. One of the primary rRNA binding proteins, it binds directly to 16S rRNA where it helps nucleate assembly of the platform of the 30S subunit by binding and bridging several RNA helices of the 16S rRNA. In terms of biological role, forms an intersubunit bridge (bridge B4) with the 23S rRNA of the 50S subunit in the ribosome. The chain is Small ribosomal subunit protein uS15 from Francisella tularensis subsp. holarctica (strain LVS).